The sequence spans 221 residues: GDP-perosamine N-acetyltransferase (221 aa).

His-139 functions as the Proton acceptor in the catalytic mechanism.

This sequence belongs to the transferase hexapeptide repeat family. In terms of assembly, homotrimer.

It carries out the reaction GDP-alpha-D-perosamine + acetyl-CoA = GDP-N-acetyl-alpha-D-perosamine + CoA + H(+). Its pathway is bacterial outer membrane biogenesis; LPS O-antigen biosynthesis. Its function is as follows. Catalyzes the transfer of an acetyl residue from acetyl-CoA onto GDP-perosamine to form GDP-N-acetyl-perosamine. The polypeptide is GDP-perosamine N-acetyltransferase (Escherichia coli O157:H7).